A 175-amino-acid polypeptide reads, in one-letter code: Ribosome maturation factor RimM (175 aa).

One can recognise a PRC barrel domain in the interval 96–175 (EGDFYWHDLI…TIEVDWDAGF (80 aa)).

The protein belongs to the RimM family. Binds ribosomal protein uS19.

It localises to the cytoplasm. An accessory protein needed during the final step in the assembly of 30S ribosomal subunit, possibly for assembly of the head region. Essential for efficient processing of 16S rRNA. May be needed both before and after RbfA during the maturation of 16S rRNA. It has affinity for free ribosomal 30S subunits but not for 70S ribosomes. The sequence is that of Ribosome maturation factor RimM from Histophilus somni (strain 129Pt) (Haemophilus somnus).